Here is a 346-residue protein sequence, read N- to C-terminus: MEKLARKQVQQLTPYLSARRIGGTGDVWLNANESPFNNEYKTDFARLNRYSECQPKELISAYAAYAGVKPEQTLTSRGADEGIELLIRAFCEPGEDAILYCPPTYGMYGISAETIGVERKTVPLTSDWQLELAGIEANLDNVKLVFVCSPNNPTGNLVKREDIVSLLEMTKDRAIVVMDEAYIDFCPEASTVDLLAQYPNLAILRTLSKAFALAGLRCGFTLANEELINVLLKVIAPYPVPVPVAEIATQALSEAGLARAKFQVLDLNANRAYLQVGLSMIPVLEVFEGWGNYLLVKFPDGDGLFKAAWETGIILRNSPIENCVRISVGNRDECEKTLGFIRNYYA.

N6-(pyridoxal phosphate)lysine is present on Lys-209.

It belongs to the class-II pyridoxal-phosphate-dependent aminotransferase family. Histidinol-phosphate aminotransferase subfamily. Homodimer. It depends on pyridoxal 5'-phosphate as a cofactor.

The enzyme catalyses L-histidinol phosphate + 2-oxoglutarate = 3-(imidazol-4-yl)-2-oxopropyl phosphate + L-glutamate. The protein operates within amino-acid biosynthesis; L-histidine biosynthesis; L-histidine from 5-phospho-alpha-D-ribose 1-diphosphate: step 7/9. In Vibrio campbellii (strain ATCC BAA-1116), this protein is Histidinol-phosphate aminotransferase.